Reading from the N-terminus, the 295-residue chain is Sulfotransferase 1E1 (295 aa).

Residue 48 to 53 (KSGTTW) participates in 3'-phosphoadenylyl sulfate binding. 106–108 (KSH) lines the substrate pocket. His-108 serves as the catalytic Proton acceptor. 3'-phosphoadenylyl sulfate-binding residues include Arg-130, Ser-138, and Tyr-193. Phosphoserine; by PKA occurs at positions 216 and 228. 3'-phosphoadenylyl sulfate-binding positions include 227-232 (TSFQEM) and 257-259 (RKG).

The protein belongs to the sulfotransferase 1 family. Homodimer.

It is found in the cytoplasm. Its subcellular location is the cytosol. The enzyme catalyses estrone + 3'-phosphoadenylyl sulfate = estrone 3-sulfate + adenosine 3',5'-bisphosphate + H(+). It catalyses the reaction (24S)-hydroxycholesterol + 3'-phosphoadenylyl sulfate = (24S)-hydroxycholesterol 3-sulfate + adenosine 3',5'-bisphosphate + H(+). It carries out the reaction 17beta-estradiol + 3'-phosphoadenylyl sulfate = 17beta-estradiol 3-sulfate + adenosine 3',5'-bisphosphate + H(+). The catalysed reaction is 3beta-hydroxyandrost-5-en-17-one + 3'-phosphoadenylyl sulfate = dehydroepiandrosterone 3-sulfate + adenosine 3',5'-bisphosphate + H(+). The enzyme catalyses 4-ethylphenol + 3'-phosphoadenylyl sulfate = 4-ethylphenyl sulfate + adenosine 3',5'-bisphosphate + H(+). With respect to regulation, inhibited by estradiol. In terms of biological role, sulfotransferase that utilizes 3'-phospho-5'-adenylyl sulfate (PAPS) as sulfonate donor to catalyze the sulfate conjugation of estradiol and estrone. Is a key enzyme in estrogen homeostasis, the sulfation of estrogens leads to their inactivation. Also sulfates dehydroepiandrosterone (DHEA), pregnenolone, (24S)-hydroxycholesterol and xenobiotic compounds like ethinylestradiol, equalenin, diethyl stilbesterol and 1-naphthol at significantly lower efficiency. Does not sulfonate cortisol, testosterone and dopamine. May play a role in gut microbiota-host metabolic interaction. O-sulfonates 4-ethylphenol (4-EP), a dietary tyrosine-derived metabolite produced by gut bacteria. The product 4-EPS crosses the blood-brain barrier and may negatively regulate oligodendrocyte maturation and myelination, affecting the functional connectivity of different brain regions associated with the limbic system. The polypeptide is Sulfotransferase 1E1 (SULT1E1) (Bos taurus (Bovine)).